A 266-amino-acid chain; its full sequence is Ras-like protein family member 12 (266 aa).

Residues 27–34, 74–78, and 134–137 contribute to the GTP site; these read GRRGAGKS, DTADL, and NKLD.

The protein belongs to the small GTPase superfamily. Ras family.

The catalysed reaction is GTP + H2O = GDP + phosphate + H(+). This is Ras-like protein family member 12 (Rasl12) from Mus musculus (Mouse).